The primary structure comprises 267 residues: Integral membrane protein 2C (267 aa).

Thr-37 carries the phosphothreonine modification. A helical; Signal-anchor for type II membrane protein membrane pass occupies residues 55–75 (VGGVCYLSMGMVVLLMGLVFA). Residues 136 to 230 (FGGGDPADII…LCNGKDTYRL (95 aa)) enclose the BRICHOS domain. Cys-163 and Cys-222 are oxidised to a cystine. Asn-169 carries N-linked (GlcNAc...) asparagine glycosylation.

The protein belongs to the ITM2 family. Interacts with BACE1. Interacts with APP. Interacts with STMN2. In terms of processing, type I membrane-bound, as well as soluble, furin has a pre-eminent role in ITM2C proteolytic processing. PCSK7 and PCSK5 may also be involved although to a lesser extent. The soluble form of PCSK7 is incapable of processing ITM2C. Fails to undergo shedding by ADAM10 and intramembrane cleavage by SPPL2B. As to expression, high levels in the brain, specifically in the cerebral cortex, medulla, amygdala, hippocampus, thalamus, caudate nucleus, cerebellum, olfactory lobe and spinal cord. Very low levels in other organs.

The protein resides in the lysosome membrane. The protein localises to the cell membrane. Its function is as follows. Negative regulator of amyloid-beta peptide production. May inhibit the processing of APP by blocking its access to alpha- and beta-secretase. Binding to the beta-secretase-cleaved APP C-terminal fragment is negligible, suggesting that ITM2C is a poor gamma-secretase cleavage inhibitor. May play a role in TNF-induced cell death and neuronal differentiation. The chain is Integral membrane protein 2C (ITM2C) from Homo sapiens (Human).